Reading from the N-terminus, the 734-residue chain is Photosystem I P700 chlorophyll a apoprotein A2 (734 aa).

8 helical membrane passes run 46-69 (IFASHFGQLAIIFLWTSGNLFHVA), 135-158 (LYTGALFLLFLSALSLIGGWLHLQ), 175-199 (LNHHLSGLFGVSSLAWTGHLVHVAI), 273-291 (MAHHHLAIAILFLIAGHMY), 330-353 (IHFQLGLALASLGVITSLVAQHMY), 369-395 (AALYTHHQYIAGFIMTGAFAHGAIFFI), 417-439 (AIISHLSWASLFLGFHTLGLYVH), and 517-535 (FLVHHAIALGLHTTTLILV). 2 residues coordinate [4Fe-4S] cluster: Cys-559 and Cys-568. 2 helical membrane passes run 575-596 (AFYLAVFWMLNTIGWVTFYWHW) and 643-665 (LSVWAWMFLFGHLVWATGFMFLI). Positions 654, 662, and 670 each coordinate chlorophyll a. Residue Trp-671 participates in phylloquinone binding. The helical transmembrane segment at 707-727 (LVGLAHFSVGYIFTYAAFLIA) threads the bilayer.

This sequence belongs to the PsaA/PsaB family. As to quaternary structure, the PsaA/B heterodimer binds the P700 chlorophyll special pair and subsequent electron acceptors. PSI consists of a core antenna complex that captures photons, and an electron transfer chain that converts photonic excitation into a charge separation. The eukaryotic PSI reaction center is composed of at least 11 subunits. P700 is a chlorophyll a/chlorophyll a' dimer, A0 is one or more chlorophyll a, A1 is one or both phylloquinones and FX is a shared 4Fe-4S iron-sulfur center. is required as a cofactor.

It localises to the plastid. The protein resides in the chloroplast thylakoid membrane. The catalysed reaction is reduced [plastocyanin] + hnu + oxidized [2Fe-2S]-[ferredoxin] = oxidized [plastocyanin] + reduced [2Fe-2S]-[ferredoxin]. Its function is as follows. PsaA and PsaB bind P700, the primary electron donor of photosystem I (PSI), as well as the electron acceptors A0, A1 and FX. PSI is a plastocyanin-ferredoxin oxidoreductase, converting photonic excitation into a charge separation, which transfers an electron from the donor P700 chlorophyll pair to the spectroscopically characterized acceptors A0, A1, FX, FA and FB in turn. Oxidized P700 is reduced on the lumenal side of the thylakoid membrane by plastocyanin. The chain is Photosystem I P700 chlorophyll a apoprotein A2 from Lepidium virginicum (Virginia pepperweed).